The sequence spans 514 residues: Sugar transport protein 3 (514 aa).

At 1-19 (MVAEEARKEAMAKSVSGGK) the chain is on the cytoplasmic side. Helical transmembrane passes span 20–40 (ITYF…IFGY), 87–107 (LLTS…LLAS), 124–144 (VSFL…MLII), 147–167 (LLLG…LSEM), 174–194 (GAIS…ANVI), 207–227 (ISLA…LFLP), 289–309 (LVMA…VVAF), 327–347 (MSTL…MLVV), 356–376 (FLIG…IVMV), 392–412 (VVVL…PLGW), 430–450 (VTVA…PPML), and 456–476 (GIFF…QLFL). Residues 477 to 514 (PETKNVPIEKVVGLWEKHWFWRRMTSKRDIQETTILSH) lie on the Cytoplasmic side of the membrane.

Belongs to the major facilitator superfamily. Sugar transporter (TC 2.A.1.1) family.

It localises to the membrane. Its function is as follows. Mediates an active uptake of hexoses, probably by sugar/hydrogen symport. The protein is Sugar transport protein 3 (STP3) of Arabidopsis thaliana (Mouse-ear cress).